The chain runs to 162 residues: Phosphopantetheine adenylyltransferase (162 aa).

Serine 11 provides a ligand contact to substrate. ATP-binding positions include 11 to 12 (SF) and histidine 19. Residues lysine 43, valine 76, and arginine 90 each coordinate substrate. ATP contacts are provided by residues 91 to 93 (GLR), glutamate 101, and 126 to 132 (HLYISSS).

It belongs to the bacterial CoaD family. Homohexamer. Mg(2+) is required as a cofactor.

It is found in the cytoplasm. It carries out the reaction (R)-4'-phosphopantetheine + ATP + H(+) = 3'-dephospho-CoA + diphosphate. It functions in the pathway cofactor biosynthesis; coenzyme A biosynthesis; CoA from (R)-pantothenate: step 4/5. Its function is as follows. Reversibly transfers an adenylyl group from ATP to 4'-phosphopantetheine, yielding dephospho-CoA (dPCoA) and pyrophosphate. The protein is Phosphopantetheine adenylyltransferase of Streptococcus pneumoniae (strain ATCC 700669 / Spain 23F-1).